The sequence spans 227 residues: MNLSFFDQFSSPHLLGHPLILLSLLLPALLFPSPGNRWINNRLSTIQLWLLHLITKQLMIPLNKNGHKWALMLTSLMTMLLTINLLGLLPYTFTPTTQLSMNMALAFPLWLATLLTGLRNKPSASLAHLLPEGTPTPLIPALILIETTSLLIRPLALGVRLTANLTAGHLLIQLISTASIALKPILPTVSILTMAILLLLTILEVAVAMIQAYVFVLLLSLYLQENI.

6 helical membrane-spanning segments follow: residues 14–34 (LLGH…FPSP), 69–89 (WALM…LGLL), 98–118 (QLSM…LTGL), 139–159 (IPAL…ALGV), 167–187 (AGHL…PILP), and 190–210 (SILT…VAMI).

The protein belongs to the ATPase A chain family. In terms of assembly, component of the ATP synthase complex composed at least of ATP5F1A/subunit alpha, ATP5F1B/subunit beta, ATP5MC1/subunit c (homooctomer), MT-ATP6/subunit a, MT-ATP8/subunit 8, ATP5ME/subunit e, ATP5MF/subunit f, ATP5MG/subunit g, ATP5MK/subunit k, ATP5MJ/subunit j, ATP5F1C/subunit gamma, ATP5F1D/subunit delta, ATP5F1E/subunit epsilon, ATP5PF/subunit F6, ATP5PB/subunit b, ATP5PD/subunit d, ATP5PO/subunit OSCP. ATP synthase complex consists of a soluble F(1) head domain (subunits alpha(3) and beta(3)) - the catalytic core - and a membrane F(0) domain - the membrane proton channel (subunits c, a, 8, e, f, g, k and j). These two domains are linked by a central stalk (subunits gamma, delta, and epsilon) rotating inside the F1 region and a stationary peripheral stalk (subunits F6, b, d, and OSCP). Interacts with DNAJC30; interaction is direct.

The protein localises to the mitochondrion inner membrane. It carries out the reaction H(+)(in) = H(+)(out). Functionally, subunit a, of the mitochondrial membrane ATP synthase complex (F(1)F(0) ATP synthase or Complex V) that produces ATP from ADP in the presence of a proton gradient across the membrane which is generated by electron transport complexes of the respiratory chain. ATP synthase complex consist of a soluble F(1) head domain - the catalytic core - and a membrane F(1) domain - the membrane proton channel. These two domains are linked by a central stalk rotating inside the F(1) region and a stationary peripheral stalk. During catalysis, ATP synthesis in the catalytic domain of F(1) is coupled via a rotary mechanism of the central stalk subunits to proton translocation. With the subunit c (ATP5MC1), forms the proton-conducting channel in the F(0) domain, that contains two crucial half-channels (inlet and outlet) that facilitate proton movement from the mitochondrial intermembrane space (IMS) into the matrix. Protons are taken up via the inlet half-channel and released through the outlet half-channel, following a Grotthuss mechanism. The chain is ATP synthase F(0) complex subunit a from Anas platyrhynchos (Mallard).